The primary structure comprises 104 residues: MFSTSDQVSKMNSRILSALLILGIATCVIAGGFCPKSRHPQCNLSYKINDCCAQSDCRVGSVCCVEGCGNVCRAESDTPLGEKFVDGSECKHGHVFPKKWYQFR.

The signal sequence occupies residues 1–30 (MFSTSDQVSKMNSRILSALLILGIATCVIA). The region spanning 31-76 (GGFCPKSRHPQCNLSYKINDCCAQSDCRVGSVCCVEGCGNVCRAES) is the WAP domain. 5 cysteine pairs are disulfide-bonded: cysteine 34-cysteine 64, cysteine 42-cysteine 68, cysteine 51-cysteine 63, cysteine 52-cysteine 90, and cysteine 57-cysteine 72.

The protein belongs to the venom protein 11 family. 02 (wap-2) subfamily. Contains 5 disulfide bonds. Expressed by the venom gland.

It localises to the secreted. Has antibacterial activity. This chain is U20-lycotoxin-Ls1d, found in Lycosa singoriensis (Wolf spider).